The primary structure comprises 292 residues: ATP synthase gamma chain (292 aa).

It belongs to the ATPase gamma chain family. As to quaternary structure, F-type ATPases have 2 components, CF(1) - the catalytic core - and CF(0) - the membrane proton channel. CF(1) has five subunits: alpha(3), beta(3), gamma(1), delta(1), epsilon(1). CF(0) has three main subunits: a, b and c.

The protein localises to the cell membrane. Produces ATP from ADP in the presence of a proton gradient across the membrane. The gamma chain is believed to be important in regulating ATPase activity and the flow of protons through the CF(0) complex. The protein is ATP synthase gamma chain of Streptococcus thermophilus (strain CNRZ 1066).